Consider the following 242-residue polypeptide: 4-hydroxy-tetrahydrodipicolinate reductase (242 aa).

Residues 8–13, 75–77, and 99–102 contribute to the NAD(+) site; these read GSNGRM, GTT, and ATNM. The active-site Proton donor/acceptor is the His131. His132 lines the (S)-2,3,4,5-tetrahydrodipicolinate pocket. Residue Lys135 is the Proton donor of the active site. Residue 141–142 coordinates (S)-2,3,4,5-tetrahydrodipicolinate; sequence GT.

It belongs to the DapB family.

The protein resides in the cytoplasm. It catalyses the reaction (S)-2,3,4,5-tetrahydrodipicolinate + NAD(+) + H2O = (2S,4S)-4-hydroxy-2,3,4,5-tetrahydrodipicolinate + NADH + H(+). The enzyme catalyses (S)-2,3,4,5-tetrahydrodipicolinate + NADP(+) + H2O = (2S,4S)-4-hydroxy-2,3,4,5-tetrahydrodipicolinate + NADPH + H(+). The protein operates within amino-acid biosynthesis; L-lysine biosynthesis via DAP pathway; (S)-tetrahydrodipicolinate from L-aspartate: step 4/4. In terms of biological role, catalyzes the conversion of 4-hydroxy-tetrahydrodipicolinate (HTPA) to tetrahydrodipicolinate. The sequence is that of 4-hydroxy-tetrahydrodipicolinate reductase from Campylobacter lari (strain RM2100 / D67 / ATCC BAA-1060).